A 360-amino-acid chain; its full sequence is A-type ATP synthase subunit C (360 aa).

Belongs to the V-ATPase V0D/AC39 subunit family. Has multiple subunits, A(3), B(3), C, D, E, F, G, I and K(x); there may be a few other subunits as well.

It is found in the cell membrane. Its function is as follows. Component of the A-type ATP synthase that produces ATP from ADP in the presence of a proton gradient across the membrane. This is A-type ATP synthase subunit C from Methanosarcina mazei (strain ATCC BAA-159 / DSM 3647 / Goe1 / Go1 / JCM 11833 / OCM 88) (Methanosarcina frisia).